A 505-amino-acid chain; its full sequence is Calcium/calmodulin-dependent protein kinase kinase 1 (505 aa).

Positions 27-66 are disordered; the sequence is HLEEAEEGPEPASNGVDPPPRARAASVIPGSASRPTPVRP. Residues S67 and S74 each carry the phosphoserine modification. An Asymmetric dimethylarginine modification is found at R78. S100 is modified (phosphoserine). T108 is modified (phosphothreonine). Positions 128–409 constitute a Protein kinase domain; it reads YKLQSEIGKG…VSDIKLHPWV (282 aa). Residues 134 to 142 and K157 contribute to the ATP site; that span reads IGKGAYGVV. Residues 167-189 form an RP domain region; the sequence is QYGFPRRPPPRGSQAPQGGPAKQ. Residue D275 is the Proton acceptor of the active site. The autoinhibitory domain stretch occupies residues 435–440; that stretch reads KNSVKL. The segment at 438–463 is calmodulin-binding; that stretch reads VKLIPSWTTVILVKSMLRKRSFGNPF. Residues S458, S475, and S492 each carry the phosphoserine modification. Residues 460 to 505 form a disordered region; the sequence is GNPFEPQARREERSMSAPGNLLLKEGCGEGGKSPELPGVQEDEAAS.

It belongs to the protein kinase superfamily. Ser/Thr protein kinase family. Interacts with CAMK4 and calmodulin. In terms of processing, appears to be autophosphorylated. Phosphorylated at multiple sites by PRCAKA/PKA. Phosphorylation of Ser-458 is blocked upon binding to Ca(2+)/calmodulin. May be phosphorylated by CAMK1 and CAMK4. Mostly expressed in the brain with higher levels in cortex and hippocampus. Lower expression levels were detected in striatum, nucleus accumbens and cerebellum (at protein level). Abundant in forebrain, weaker in cerebellum and also detected in thymus and spleen.

It localises to the cytoplasm. Its subcellular location is the nucleus. The catalysed reaction is L-seryl-[protein] + ATP = O-phospho-L-seryl-[protein] + ADP + H(+). It catalyses the reaction L-threonyl-[protein] + ATP = O-phospho-L-threonyl-[protein] + ADP + H(+). Activated by Ca(2+)/calmodulin. Binding of calmodulin may relieve intrasteric autoinhibition. Partially inhibited upon phosphorylation by PRCAKA/PKA. May be regulated through phosphorylation by CAMK1 and CAMK4. Calcium/calmodulin-dependent protein kinase that belongs to a proposed calcium-triggered signaling cascade involved in a number of cellular processes. Phosphorylates CAMK1, CAMK1D, CAMK1G and CAMK4. Involved in regulating cell apoptosis. Promotes cell survival by phosphorylating AKT1/PKB that inhibits pro-apoptotic BAD/Bcl2-antagonist of cell death. In Rattus norvegicus (Rat), this protein is Calcium/calmodulin-dependent protein kinase kinase 1 (Camkk1).